Here is a 73-residue protein sequence, read N- to C-terminus: Long neurotoxin 1 (73 aa).

Intrachain disulfides connect C3–C21, C14–C42, C27–C31, C46–C57, and C58–C63.

It belongs to the three-finger toxin family. Long-chain subfamily. Type II alpha-neurotoxin sub-subfamily. Expressed by the venom gland.

It is found in the secreted. Its function is as follows. Binds with high affinity to muscular (alpha-1/CHRNA1) and neuronal (alpha-7/CHRNA7) nicotinic acetylcholine receptor (nAChR) and inhibits acetylcholine from binding to the receptor, thereby impairing neuromuscular and neuronal transmission. This chain is Long neurotoxin 1, found in Ophiophagus hannah (King cobra).